The following is a 337-amino-acid chain: Glyceraldehyde-3-phosphate dehydrogenase (337 aa).

Residues 13 to 14 (RI), D35, and R80 contribute to the NAD(+) site. D-glyceraldehyde 3-phosphate-binding positions include 151 to 153 (SCT), T182, 211 to 212 (TG), and R234. C152 serves as the catalytic Nucleophile. N316 contacts NAD(+).

Belongs to the glyceraldehyde-3-phosphate dehydrogenase family. Homotetramer.

The protein localises to the cytoplasm. The catalysed reaction is D-glyceraldehyde 3-phosphate + phosphate + NAD(+) = (2R)-3-phospho-glyceroyl phosphate + NADH + H(+). It functions in the pathway carbohydrate degradation; glycolysis; pyruvate from D-glyceraldehyde 3-phosphate: step 1/5. The polypeptide is Glyceraldehyde-3-phosphate dehydrogenase (GPD1) (Monascus purpureus (Red mold)).